Consider the following 160-residue polypeptide: SPbeta prophage-derived uncharacterized protein YokE (160 aa).

This is SPbeta prophage-derived uncharacterized protein YokE (yokE) from Bacillus subtilis (strain 168).